Here is a 525-residue protein sequence, read N- to C-terminus: MSEYLQQIAKRRTFAIISHPDAGKTTITEKMLLFGNAIKTAGTVKAKKSGIHATSDWMEMEKQRGISITTSVMQFPYNGRIINLLDTPGHEDFSEDTYRTLTAVDSALMVVDAVKGVEDRTIKLMNVCRLRDTPIVTFMNKFDRDTRDPLELLDEVENILKIKCAPMNWPIGMGKYFKGVYDLYNDEVTLFETGHGHEIYPYKKIKGLANAKDSIGIDLYEDLEMEIDLVRGASHEFDEQEFLEGNLTPVYFGTALSNFGVKEMMDGFTRYAPAPQHREADQRVVAADEQKLTGFVFKIQANMDEKHRNRIAFFRICSGKYEKGMKIFHERTGKQMQISKALTFMAGEREQVEEGYAGDIIGLHNHGSIQIGDSFTQGEKLKFKGIPNFAPEIFKRVKLNDPLKMKALQKGLVQLSEEGATQVFKPFISNDLVLGAVGVLQFDVVAQRLASEYNVKCSYEGVNVTLARWIFCNDEKKLNDFKKKYEVNLAYDGAGYLTYLAPTGVNLQLAQEKNPDIIFSATREH.

The 268-residue stretch at 9–276 (AKRRTFAIIS…GFTRYAPAPQ (268 aa)) folds into the tr-type G domain. GTP-binding positions include 18 to 25 (SHPDAGKT), 86 to 90 (DTPGH), and 140 to 143 (NKFD).

Belongs to the TRAFAC class translation factor GTPase superfamily. Classic translation factor GTPase family. PrfC subfamily.

It is found in the cytoplasm. In terms of biological role, increases the formation of ribosomal termination complexes and stimulates activities of RF-1 and RF-2. It binds guanine nucleotides and has strong preference for UGA stop codons. It may interact directly with the ribosome. The stimulation of RF-1 and RF-2 is significantly reduced by GTP and GDP, but not by GMP. This is Peptide chain release factor 3 from Francisella tularensis subsp. holarctica (strain FTNF002-00 / FTA).